A 435-amino-acid chain; its full sequence is Probable histidine--tRNA ligase, cytoplasmic (435 aa).

It belongs to the class-II aminoacyl-tRNA synthetase family.

The protein localises to the cytoplasm. It carries out the reaction tRNA(His) + L-histidine + ATP = L-histidyl-tRNA(His) + AMP + diphosphate + H(+). The sequence is that of Probable histidine--tRNA ligase, cytoplasmic from Encephalitozoon cuniculi (strain GB-M1) (Microsporidian parasite).